Here is a 519-residue protein sequence, read N- to C-terminus: Baeyer-Villiger monooxygenase (519 aa).

Residues Glu-41, 49–52 (TWRD), Asp-61, Tyr-67, and Val-110 contribute to the FAD site. An NADP(+)-binding site is contributed by 59–61 (ACD). Residues 183-189 (TGASAIQ), 206-207 (RT), and 292-293 (KR) contribute to the NADP(+) site. Met-399 lines the FAD pocket. The interval 499–519 (GAKAAEADTGADTGADAEVSA) is disordered.

Belongs to the FAD-binding monooxygenase family. Requires FAD as cofactor.

Catalyzes a Baeyer-Villiger oxidation reaction, i.e. the insertion of an oxygen atom into a carbon-carbon bond adjacent to a carbonyl, which converts ketones to esters or lactones using NADPH and/or NADH as an electron donor. Thus, can convert bicyclo[3.2.0]hept-2-en-6-one into the oxidative lactone products 2-oxabicyclo[3.3.0]oct-6-en-3-one and 3-oxabicyclo[3.3.0]oct-6-en-2-one. Is also able to catalyze the sulfoxidation of methyl phenyl sulfide (thioanisole). This chain is Baeyer-Villiger monooxygenase, found in Streptomyces coelicolor (strain ATCC BAA-471 / A3(2) / M145).